A 267-amino-acid polypeptide reads, in one-letter code: tRNA pseudouridine synthase A (267 aa).

Catalysis depends on aspartate 55, which acts as the Nucleophile. Tyrosine 111 is a substrate binding site.

It belongs to the tRNA pseudouridine synthase TruA family.

The enzyme catalyses uridine(38/39/40) in tRNA = pseudouridine(38/39/40) in tRNA. Functionally, formation of pseudouridine at positions 38, 39 and 40 in the anticodon stem and loop of transfer RNAs. The polypeptide is tRNA pseudouridine synthase A (Thermococcus kodakarensis (strain ATCC BAA-918 / JCM 12380 / KOD1) (Pyrococcus kodakaraensis (strain KOD1))).